A 223-amino-acid chain; its full sequence is ATP phosphoribosyltransferase (223 aa).

It belongs to the ATP phosphoribosyltransferase family. Short subfamily. Heteromultimer composed of HisG and HisZ subunits.

The protein resides in the cytoplasm. It carries out the reaction 1-(5-phospho-beta-D-ribosyl)-ATP + diphosphate = 5-phospho-alpha-D-ribose 1-diphosphate + ATP. It functions in the pathway amino-acid biosynthesis; L-histidine biosynthesis; L-histidine from 5-phospho-alpha-D-ribose 1-diphosphate: step 1/9. Functionally, catalyzes the condensation of ATP and 5-phosphoribose 1-diphosphate to form N'-(5'-phosphoribosyl)-ATP (PR-ATP). Has a crucial role in the pathway because the rate of histidine biosynthesis seems to be controlled primarily by regulation of HisG enzymatic activity. This is ATP phosphoribosyltransferase from Bordetella bronchiseptica (strain ATCC BAA-588 / NCTC 13252 / RB50) (Alcaligenes bronchisepticus).